Here is a 137-residue protein sequence, read N- to C-terminus: Putative pre-16S rRNA nuclease (137 aa).

This sequence belongs to the YqgF nuclease family.

It is found in the cytoplasm. Functionally, could be a nuclease involved in processing of the 5'-end of pre-16S rRNA. In Anaeromyxobacter dehalogenans (strain 2CP-C), this protein is Putative pre-16S rRNA nuclease.